A 240-amino-acid polypeptide reads, in one-letter code: Putative exosome complex component RRP41 (240 aa).

This sequence belongs to the RNase PH family. Component of the RNA exosome complex.

The protein localises to the cytoplasm. It localises to the nucleus. The protein resides in the nucleolus. Its subcellular location is the nucleoplasm. Functionally, non-catalytic component of the RNA exosome complex which has 3'-&gt;5' exoribonuclease activity and participates in a multitude of cellular RNA processing and degradation events. In Caenorhabditis elegans, this protein is Putative exosome complex component RRP41 (exos-4.1).